Reading from the N-terminus, the 325-residue chain is DNA-directed RNA polymerase subunit alpha (325 aa).

Positions 1–238 are alpha N-terminal domain (alpha-NTD); that stretch reads MSLKSLLKGF…EHLTVFINFE (238 aa). Residues 254–325 are alpha C-terminal domain (alpha-CTD); the sequence is KLKASLSKHV…LGLSFGMRDF (72 aa).

Belongs to the RNA polymerase alpha chain family. As to quaternary structure, homodimer. The RNAP catalytic core consists of 2 alpha, 1 beta, 1 beta' and 1 omega subunit. When a sigma factor is associated with the core the holoenzyme is formed, which can initiate transcription.

The catalysed reaction is RNA(n) + a ribonucleoside 5'-triphosphate = RNA(n+1) + diphosphate. DNA-dependent RNA polymerase catalyzes the transcription of DNA into RNA using the four ribonucleoside triphosphates as substrates. The sequence is that of DNA-directed RNA polymerase subunit alpha from Leptospira borgpetersenii serovar Hardjo-bovis (strain JB197).